Reading from the N-terminus, the 180-residue chain is Large ribosomal subunit protein uL16 (180 aa).

The protein belongs to the universal ribosomal protein uL16 family.

This chain is Large ribosomal subunit protein uL16, found in Hyperthermus butylicus (strain DSM 5456 / JCM 9403 / PLM1-5).